A 2116-amino-acid chain; its full sequence is Non-structural polyprotein p200 (2116 aa).

The required for efficient proteolysis and P150-P90 interaction stretch occupies residues 36–49 (EVRDVVTAAQKRAI). The region spanning 57–247 (VFTQMQVSDH…TRPCTTRIYQ (191 aa)) is the Alphavirus-like MT domain. A compositionally biased stretch (basic and acidic residues) spans 457-467 (GPLEDGGRHLD). 2 disordered regions span residues 457-477 (GPLEDGGRHLDTVQPPKSPPR) and 712-805 (AGPR…ADPD). Composition is skewed to pro residues over residues 721–730 (SPPPGDPPPP) and 745–776 (TPPPAPARDPPPPAPSPPAPPRAGDPVPPIPA). 3 consecutive short sequence motifs (pxxPxR; class II SH3-binding) follow at residues 727 to 732 (PPPPRR), 747 to 752 (PPAPAR), and 761 to 766 (PPAPPR). Residues 806–985 (SDIVESYARA…LTHASVLVGA (180 aa)) enclose the Macro domain. Positions 992-1031 (VSPPPTEPLASCPAGDPGRPAQRSASPPATPLGDATAPEP) are disordered. The region spanning 1000–1301 (LASCPAGDPG…WLAVPLSRGG (302 aa)) is the Peptidase C27 domain. The active-site For cysteine protease activity is the Cys1152. The interaction with host CALM1 stretch occupies residues 1152-1183 (CWLRAAANVAQAARACGAYTSAGCPKCAYGRA). Residues Cys1175, Cys1178, Cys1227, and His1273 each contribute to the Zn(2+) site. The segment at 1193 to 1228 (FAALSQRWSASHADASPDGTGDPLDPLMETVGCACS) is EF-hand-like. The active-site For cysteine protease activity is the His1273. In terms of domain architecture, (+)RNA virus helicase ATP-binding spans 1320-1468 (EVRRLGDDAM…VPDRWPTERS (149 aa)). 1352–1359 (MAAGAGKT) contacts a ribonucleoside 5'-triphosphate. The region spanning 1469–1609 (RHTWRFPDCW…ELKEVPAGID (141 aa)) is the (+)RNA virus helicase C-terminal domain. Residues 1700–1900 (YRAGEDGSTL…VELEISAALL (201 aa)) form an involved in P150-P90 interaction region. Positions 1870-1981 (TNAIEVDFTE…FLPEGARSAA (112 aa)) constitute a RdRp catalytic domain. The Human RB1 binding motif lies at 1902 to 1906 (LPCAE).

In terms of assembly, interacts with RNA-directed RNA polymerase p90. Interacts with host CALM1; this interaction is necessary for the protease activity and viral infectivity. Interacts with host C1QBP. Interacts with the capsid protein. As to quaternary structure, interacts with human RB1/retinoblastoma protein. Interacts with protease/methyltransferase p150. It depends on Zn(2+) as a cofactor. Specific enzymatic cleavage by its own cysteine protease yield mature proteins p150 and p90.

The protein localises to the host membrane. It is found in the host cytoplasm. It localises to the host perinuclear region. The catalysed reaction is RNA(n) + a ribonucleoside 5'-triphosphate = RNA(n+1) + diphosphate. It carries out the reaction a ribonucleoside 5'-triphosphate + H2O = a ribonucleoside 5'-diphosphate + phosphate + H(+). It catalyses the reaction ATP + H2O = ADP + phosphate + H(+). Functionally, probable principal replicase for the negative-strand DNA, which replicates the 40S (+) genomic RNA into (-) antigenomic RNA. It cannot replicate the (-) into (+) until cleaved into p150 and p90 mature proteins. Its function is as follows. Protease that cleaves the precursor polyprotein into two mature products. Together with RNA-directed RNA polymerase p90, replicates the 40S genomic and antigenomic RNA by recognizing replications specific signals. The heterodimer P150/p90 is probably the principal replicase for positive-strand genomic RNA and the 24S subgenomic RNA, which codes for structural proteins. Responsible for the mRNA-capping of the viral mRNAs. This function is necessary since all viral RNAs are synthesized in the cytoplasm, and host capping enzymes are restricted to the nucleus. Forms fibers late in the infection that may be involved in cell-to-cell spread of the virus RNA in the absence of virus particle formation. Together with protease/methyltransferase p150, replicates the 40S genomic and antigenomic RNA by recognizing replications specific signals. The heterodimer P150/p90 is probably the principal replicase for positive-strand genomic RNA and the 24S subgenomic RNA, which codes for structural proteins. A helicase activity is probably also present. This Rubella virus (strain Therien) (RUBV) protein is Non-structural polyprotein p200.